Here is a 297-residue protein sequence, read N- to C-terminus: Small ribosomal subunit protein uS2 (297 aa).

Positions Asp276 to Trp297 are disordered.

This sequence belongs to the universal ribosomal protein uS2 family. As to quaternary structure, component of the small ribosomal subunit. Mature ribosomes consist of a small (40S) and a large (60S) subunit. The 40S subunit contains about 33 different proteins and 1 molecule of RNA (18S). The 60S subunit contains about 49 different proteins and 3 molecules of RNA (25S, 5.8S and 5S). Interacts with RPS21.

It localises to the cytoplasm. Its function is as follows. Required for the assembly and/or stability of the 40S ribosomal subunit. Required for the processing of the 20S rRNA-precursor to mature 18S rRNA in a late step of the maturation of 40S ribosomal subunits. The polypeptide is Small ribosomal subunit protein uS2 (Uncinocarpus reesii (strain UAMH 1704)).